A 445-amino-acid chain; its full sequence is tRNA-2-methylthio-N(6)-dimethylallyladenosine synthase (445 aa).

Residues Lys3–Arg124 enclose the MTTase N-terminal domain. Residues Cys12, Cys48, Cys87, Cys162, Cys166, and Cys169 each coordinate [4Fe-4S] cluster. In terms of domain architecture, Radical SAM core spans Tyr148–Ala380. The TRAM domain occupies Thr383 to Leu445.

It belongs to the methylthiotransferase family. MiaB subfamily. In terms of assembly, monomer. [4Fe-4S] cluster serves as cofactor.

It localises to the cytoplasm. The catalysed reaction is N(6)-dimethylallyladenosine(37) in tRNA + (sulfur carrier)-SH + AH2 + 2 S-adenosyl-L-methionine = 2-methylsulfanyl-N(6)-dimethylallyladenosine(37) in tRNA + (sulfur carrier)-H + 5'-deoxyadenosine + L-methionine + A + S-adenosyl-L-homocysteine + 2 H(+). In terms of biological role, catalyzes the methylthiolation of N6-(dimethylallyl)adenosine (i(6)A), leading to the formation of 2-methylthio-N6-(dimethylallyl)adenosine (ms(2)i(6)A) at position 37 in tRNAs that read codons beginning with uridine. The protein is tRNA-2-methylthio-N(6)-dimethylallyladenosine synthase of Rickettsia rickettsii (strain Iowa).